A 312-amino-acid polypeptide reads, in one-letter code: Thioredoxin reductase (312 aa).

33–43 (EGFFSGIAGGQ) serves as a coordination point for FAD. Cys138 and Cys141 are joined by a disulfide. 283–292 (DVQDKYYRQA) serves as a coordination point for FAD.

This sequence belongs to the class-II pyridine nucleotide-disulfide oxidoreductase family. Homodimer. Requires FAD as cofactor.

The protein resides in the cytoplasm. The catalysed reaction is [thioredoxin]-dithiol + NADP(+) = [thioredoxin]-disulfide + NADPH + H(+). The chain is Thioredoxin reductase (trxB) from Chlamydia trachomatis serovar D (strain ATCC VR-885 / DSM 19411 / UW-3/Cx).